The following is a 177-amino-acid chain: Large ribosomal subunit protein uL6 (177 aa).

The protein belongs to the universal ribosomal protein uL6 family. In terms of assembly, part of the 50S ribosomal subunit.

Its function is as follows. This protein binds to the 23S rRNA, and is important in its secondary structure. It is located near the subunit interface in the base of the L7/L12 stalk, and near the tRNA binding site of the peptidyltransferase center. The chain is Large ribosomal subunit protein uL6 from Bradyrhizobium sp. (strain ORS 278).